We begin with the raw amino-acid sequence, 352 residues long: Photosystem II protein D1 (352 aa).

T2 is subject to N-acetylthreonine. Residue T2 is modified to Phosphothreonine. Helical transmembrane passes span 29–46 (YIGW…TATS), 118–133 (HFLL…EWEL), and 142–156 (WIAV…AASA). Chlorophyll a is bound at residue H118. Y126 lines the pheophytin a pocket. Residues D170 and E189 each coordinate [CaMn4O5] cluster. The helical transmembrane segment at 197 to 218 (FHMLGVAGVFGGSLFSAMHGSL) threads the bilayer. H198 lines the chlorophyll a pocket. A quinone-binding positions include H215 and 264–265 (SF). H215 provides a ligand contact to Fe cation. H272 lines the Fe cation pocket. A helical membrane pass occupies residues 274–288 (FLAAWPVIGIWFTAL). Residues H332, E333, D342, and A344 each coordinate [CaMn4O5] cluster. The propeptide occupies 345–352 (STNSSSNN).

It belongs to the reaction center PufL/M/PsbA/D family. PSII is composed of 1 copy each of membrane proteins PsbA, PsbB, PsbC, PsbD, PsbE, PsbF, PsbH, PsbI, PsbJ, PsbK, PsbL, PsbM, PsbT, PsbX, PsbY, PsbZ, Psb30/Ycf12, at least 3 peripheral proteins of the oxygen-evolving complex and a large number of cofactors. It forms dimeric complexes. Requires The D1/D2 heterodimer binds P680, chlorophylls that are the primary electron donor of PSII, and subsequent electron acceptors. It shares a non-heme iron and each subunit binds pheophytin, quinone, additional chlorophylls, carotenoids and lipids. D1 provides most of the ligands for the Mn4-Ca-O5 cluster of the oxygen-evolving complex (OEC). There is also a Cl(-1) ion associated with D1 and D2, which is required for oxygen evolution. The PSII complex binds additional chlorophylls, carotenoids and specific lipids. as cofactor. Post-translationally, tyr-161 forms a radical intermediate that is referred to as redox-active TyrZ, YZ or Y-Z. In terms of processing, C-terminally processed by CTPA; processing is essential to allow assembly of the oxygen-evolving complex and thus photosynthetic growth.

The protein localises to the plastid. It localises to the chloroplast thylakoid membrane. The catalysed reaction is 2 a plastoquinone + 4 hnu + 2 H2O = 2 a plastoquinol + O2. Its function is as follows. This is one of the two reaction center proteins of photosystem II. In terms of biological role, photosystem II (PSII) is a light-driven water:plastoquinone oxidoreductase that uses light energy to abstract electrons from H(2)O, generating O(2) and a proton gradient subsequently used for ATP formation. It consists of a core antenna complex that captures photons, and an electron transfer chain that converts photonic excitation into a charge separation. The D1/D2 (PsbA/PsbD) reaction center heterodimer binds P680, the primary electron donor of PSII as well as several subsequent electron acceptors. This Chlamydomonas reinhardtii (Chlamydomonas smithii) protein is Photosystem II protein D1.